We begin with the raw amino-acid sequence, 591 residues long: Aspartate--tRNA ligase (591 aa).

Glu173 serves as a coordination point for L-aspartate. An aspartate region spans residues 197–200 (QLFK). An L-aspartate-binding site is contributed by Arg219. ATP is bound by residues 219-221 (RDE) and Gln228. His448 serves as a coordination point for L-aspartate. ATP is bound at residue Glu482. Position 489 (Arg489) interacts with L-aspartate. Residue 534–537 (GLDR) coordinates ATP.

Belongs to the class-II aminoacyl-tRNA synthetase family. Type 1 subfamily. In terms of assembly, homodimer.

The protein resides in the cytoplasm. It carries out the reaction tRNA(Asp) + L-aspartate + ATP = L-aspartyl-tRNA(Asp) + AMP + diphosphate. Catalyzes the attachment of L-aspartate to tRNA(Asp) in a two-step reaction: L-aspartate is first activated by ATP to form Asp-AMP and then transferred to the acceptor end of tRNA(Asp). This Shewanella frigidimarina (strain NCIMB 400) protein is Aspartate--tRNA ligase.